The following is a 1398-amino-acid chain: Protein timeless (1398 aa).

A necessary for normal circadian rhythm region spans residues 237–268; it reads VSTLQKLLSLWFEASLSESSEDNESNTSPPKQ. 5 disordered regions span residues 254-300, 322-452, 478-555, 1127-1147, and 1220-1239; these read ESSE…GGMR, ARVP…QKFN, TKGK…LRRK, TASSPSRYHHTGPRNSLSSVS, and NHRTGPSGDPSDCIGSSSTT. A compositionally biased stretch (low complexity) spans 273–290; that stretch reads SSPMLTSDPTSDSSDNGS. Residues 291-300 are compositionally biased toward gly residues; that stretch reads NGRGMGGGMR. The segment covering 338–355 has biased composition (polar residues); it reads MTGNDSEQPGSPEQSQPA. Residues 365-375 show a composition bias toward basic and acidic residues; that stretch reads EDQRHRQLNEH. Residues 376 to 390 are compositionally biased toward acidic residues; it reads GEEDEDEDEVEEEEY. 3 stretches are compositionally biased toward polar residues: residues 400–421, 440–452, and 504–515; these read LNLTQQPADKVNNTTNPTSSAP, ASTSAHAQMQKFN, and QVENQESISTSS. Residues 522–531 show a composition bias toward low complexity; it reads QGKPQHQKPP. The short motif at 550–560 is the Nuclear localization signal element; the sequence is KELRRKKLVKR.

It belongs to the timeless family. As to quaternary structure, forms a heterodimer with period (PER); the complex then translocates into the nucleus. In terms of processing, phosphorylated with a circadian rhythmicity. Expressed in head, photoreceptors, lateral neurons and glial cells in the lamina and medulla of the optic lobes. Expression follows a light-dark cycle, levels show a significant decrease at the end of the night and then remain low throughout the light period (at protein level).

It localises to the nucleus. The protein resides in the cytoplasm. It is found in the perinuclear region. In terms of biological role, required for the production of circadian rhythms. The biological cycle depends on the rhythmic formation and nuclear localization of the TIM-PER complex. Light induces the degradation of TIM, which promotes elimination of PER. Nuclear activity of the heterodimer coordinatively regulates PER and TIM transcription through a negative feedback loop. Behaves as a negative element in circadian transcriptional loop. Does not appear to bind DNA, suggesting indirect transcriptional inhibition. This chain is Protein timeless (tim), found in Drosophila melanogaster (Fruit fly).